The chain runs to 71 residues: Putative membrane protein insertion efficiency factor (71 aa).

It belongs to the UPF0161 family.

The protein localises to the cell membrane. In terms of biological role, could be involved in insertion of integral membrane proteins into the membrane. The sequence is that of Putative membrane protein insertion efficiency factor from Desulforudis audaxviator (strain MP104C).